Here is a 170-residue protein sequence, read N- to C-terminus: Shikimate kinase (170 aa).

15-20 contributes to the ATP binding site; it reads GAGKTT. Thr19 provides a ligand contact to Mg(2+). Residues Asp37, Arg61, and Gly83 each contribute to the substrate site. Arg121 contacts ATP. Arg140 lines the substrate pocket.

The protein belongs to the shikimate kinase family. As to quaternary structure, monomer. Requires Mg(2+) as cofactor.

It localises to the cytoplasm. The catalysed reaction is shikimate + ATP = 3-phosphoshikimate + ADP + H(+). Its pathway is metabolic intermediate biosynthesis; chorismate biosynthesis; chorismate from D-erythrose 4-phosphate and phosphoenolpyruvate: step 5/7. Functionally, catalyzes the specific phosphorylation of the 3-hydroxyl group of shikimic acid using ATP as a cosubstrate. The chain is Shikimate kinase from Neisseria gonorrhoeae (strain ATCC 700825 / FA 1090).